We begin with the raw amino-acid sequence, 302 residues long: Sulfate adenylyltransferase subunit 2 (302 aa).

This sequence belongs to the PAPS reductase family. CysD subfamily. Heterodimer composed of CysD, the smaller subunit, and CysN.

The enzyme catalyses sulfate + ATP + H(+) = adenosine 5'-phosphosulfate + diphosphate. Its pathway is sulfur metabolism; hydrogen sulfide biosynthesis; sulfite from sulfate: step 1/3. Functionally, with CysN forms the ATP sulfurylase (ATPS) that catalyzes the adenylation of sulfate producing adenosine 5'-phosphosulfate (APS) and diphosphate, the first enzymatic step in sulfur assimilation pathway. APS synthesis involves the formation of a high-energy phosphoric-sulfuric acid anhydride bond driven by GTP hydrolysis by CysN coupled to ATP hydrolysis by CysD. This is Sulfate adenylyltransferase subunit 2 from Escherichia coli O81 (strain ED1a).